The sequence spans 447 residues: Coagulation factor VII (447 aa).

Positions 1 to 23 (MLSQAWALALLCFLLSLWGSLPA) are cleaved as a signal peptide. Positions 24-40 (VFLPQEQALSILHRPRR) are excised as a propeptide. One can recognise a Gla domain in the interval 41 to 85 (ANGFLEELLPGSLERECREELCSFEEAHEIFRNEERTRQFWVSYN). A 4-carboxyglutamate mark is found at Glu-46, Glu-47, Glu-54, Glu-56, Glu-59, Glu-60, Glu-65, Glu-66, Glu-69, Glu-74, and Glu-75. A disulfide bridge links Cys-57 with Cys-62. Residues 86 to 122 (DGDQCASSPCQNGGSCEDQLRSYICFCPDGFEGRNCE) enclose the EGF-like 1; calcium-binding domain. Disulfide bonds link Cys-90–Cys-101, Cys-95–Cys-110, Cys-112–Cys-121, Cys-131–Cys-142, Cys-138–Cys-152, Cys-154–Cys-167, Cys-175–Cys-302, Cys-199–Cys-204, Cys-218–Cys-234, and Cys-350–Cys-369. A glycan (O-linked (Glc...) serine) is linked at Ser-92. A glycan (O-linked (Glc...) serine; alternate) is linked at Ser-92. Ser-92 carries O-linked (Xyl...) serine; alternate glycosylation. Ser-100 carries an O-linked (Fuc) serine glycan. In terms of domain architecture, EGF-like 2 spans 127 to 168 (SQLICANDNGGCEQYCGADPGAGRFCWCHEGYALQADGVSCA). Asn-185 carries N-linked (GlcNAc...) asparagine glycosylation. Positions 193–432 (IVGGHVCPKG…YTAWLRQLMG (240 aa)) constitute a Peptidase S1 domain. Residue His-233 is the Charge relay system of the active site. N-linked (GlcNAc...) asparagine glycosylation is present at Asn-243. The active-site Charge relay system is the Asp-282. Asp-378 lines the substrate pocket. Residues Cys-380 and Cys-408 are joined by a disulfide bond. Residue Ser-384 is the Charge relay system of the active site.

Belongs to the peptidase S1 family. Heterodimer of a light chain and a heavy chain linked by a disulfide bond. Post-translationally, the vitamin K-dependent, enzymatic carboxylation of some glutamate residues allows the modified protein to bind calcium. O-glycosylated. O-fucosylated by POFUT1 on a conserved serine or threonine residue found in the consensus sequence C2-X(4,5)-[S/T]-C3 of EGF domains, where C2 and C3 are the second and third conserved cysteines. In terms of processing, can be either O-glucosylated or O-xylosylated at Ser-92 by POGLUT1. As to expression, plasma.

The protein resides in the secreted. The catalysed reaction is Selective cleavage of Arg-|-Ile bond in factor X to form factor Xa.. Functionally, initiates the extrinsic pathway of blood coagulation. Serine protease that circulates in the blood in a zymogen form. Factor VII is converted to factor VIIa by factor Xa, factor XIIa, factor IXa, or thrombin by minor proteolysis. In the presence of tissue factor and calcium ions, factor VIIa then converts factor X to factor Xa by limited proteolysis. Factor VIIa also converts factor IX to factor IXa in the presence of tissue factor and calcium. The chain is Coagulation factor VII (F7) from Bos taurus (Bovine).